A 356-amino-acid polypeptide reads, in one-letter code: Alanine racemase (356 aa).

The Proton acceptor; specific for D-alanine role is filled by Lys35. Lys35 bears the N6-(pyridoxal phosphate)lysine mark. Residue Arg130 participates in substrate binding. The active-site Proton acceptor; specific for L-alanine is Tyr253. Met301 serves as a coordination point for substrate.

It belongs to the alanine racemase family. It depends on pyridoxal 5'-phosphate as a cofactor.

The catalysed reaction is L-alanine = D-alanine. It participates in amino-acid biosynthesis; D-alanine biosynthesis; D-alanine from L-alanine: step 1/1. Functionally, catalyzes the interconversion of L-alanine and D-alanine. May also act on other amino acids. The protein is Alanine racemase (alr) of Burkholderia mallei (strain NCTC 10229).